Here is a 962-residue protein sequence, read N- to C-terminus: Ran-binding proteins 9/10 homolog (962 aa).

Composition is skewed to low complexity over residues 1–33 (MENVEEAPPLSSESNSNSNNSSASSSSHQLSQS) and 41–52 (APSTSRSHSHSP). Disordered regions lie at residues 1-246 (MENV…EQQP), 271-296 (EDDDEEVDEEEEVVEDRVDRAGEVAS), and 313-402 (SSAS…QGVD). Basic and acidic residues predominate over residues 80–91 (TEARENSPHDHS). Positions 118–132 (QQQQEAPPLQQDQQE) are enriched in low complexity. Over residues 146 to 164 (DQQNQEYPAVHQDQQAEQN) the composition is skewed to polar residues. Residues 165 to 202 (QELHHIEGLIRHRESQNPEEHPPQASLENRETLGREDT) show a composition bias toward basic and acidic residues. The span at 236–245 (SGSQDLNEQQ) shows a compositional bias: polar residues. A compositionally biased stretch (acidic residues) spans 271–284 (EDDDEEVDEEEEVV). The span at 321-343 (SSNNNNNNISNHNNNNNNSNSNS) shows a compositional bias: low complexity. 2 stretches are compositionally biased toward polar residues: residues 351–360 (FYSNNGSHFS) and 368–378 (NPRSSTQTSSP). Phosphoserine occurs at positions 387, 393, and 395. Residues 389–398 (PAASSNSPQH) are compositionally biased toward polar residues. In terms of domain architecture, B30.2/SPRY spans 400–587 (GVDPLRLLYP…VDANFGQEPF (188 aa)). The 33-residue stretch at 617–649 (PENLMNRLVSTYLVHNAFSKTAEAFNGYTNQTF) folds into the LisH domain. Positions 655-712 (SIKTRQKIIKLILTGKMSQAIEHTLRSFPGLLENNKNLWFALKCRQFIEMINGADIEN) constitute a CTLH domain. The disordered stretch occupies residues 800–820 (EMEPCQSHSNGGDSSSNGNAS). A compositionally biased stretch (low complexity) spans 806 to 820 (SHSNGGDSSSNGNAS).

This sequence belongs to the RANBP9/10 family. Expressed in the GSCs and in dividing cysts. Expression is reduced in the germline as individual egg chambers are formed. Isoform C is expressed in all somatic and germline cells of the ovary. Isoform D is expressed in the GSC niche.

It is found in the cytoplasm. It localises to the membrane. Its subcellular location is the nucleus. May be involved in JAK/STAT signaling. Isoform D is required for the proper arrangement of niche cells and is autonomously required for proper niche cell size, isoform C negatively regulates the adhesive properties of the niche. The germline stem cell (GSC) niche in ovaries is made up of two somatic cell types: 8-9 cells in a single-filed array make up the terminal filament (TF), and a tight cluster of 5 or 6 cap cells (CpC). Regulating the size and adhesive properties of the CpCs is an important component of the mechanism that controls their capacity to support stem cells, isoform C and isoform D are important factors in mediating this regulation. In contrast, isoform C acts as a positive regulator of cell adhesion in follicle cell epithelium. The sequence is that of Ran-binding proteins 9/10 homolog (RanBPM) from Drosophila melanogaster (Fruit fly).